A 158-amino-acid chain; its full sequence is Cysteine-rich venom protein VAR7 (158 aa).

The N-terminal stretch at 1-22 (MILLKLYLTLAAILCQSRGTTS) is a signal peptide. Residues 41–158 (NKHNDLRRTV…MGCAINLCPN (118 aa)) enclose the SCP domain. The cysteines at positions 77 and 156 are disulfide-linked.

It belongs to the CRISP family. In terms of processing, contains 8 disulfide bonds. Expressed by the venom gland.

The protein localises to the secreted. Blocks ryanodine receptors, and potassium channels. The polypeptide is Cysteine-rich venom protein VAR7 (Varanus acanthurus (Ridge-tailed monitor)).